The following is a 375-amino-acid chain: Platelet-derived growth factor receptor-like protein (375 aa).

Residues 1-21 (MKIWLLLGLLLMHEALEDVTG) form the signal peptide. The interval 20 to 64 (TGQHPPKNKRPKEPGENRIKPTNKKVKPKIPKIKDRDSADPTPKT) is disordered. The segment covering 40-50 (PTNKKVKPKIP) has biased composition (basic residues). One can recognise an Ig-like C2-type 1 domain in the interval 62–159 (PKTQSIMTQM…GYVCRRDEAK (98 aa)). A disulfide bridge connects residues C96 and C143. N-linked (GlcNAc...) asparagine glycans are attached at residues N132 and N219. The Ig-like C2-type 2 domain maps to 272–373 (PSTTILASSN…GQTTVATTVE (102 aa)). A disulfide bond links C293 and C357.

In terms of assembly, forms a complex composed of PDGFRL, TNK2 and GRB2.

The protein resides in the secreted. This is Platelet-derived growth factor receptor-like protein (PDGFRL) from Bos taurus (Bovine).